Reading from the N-terminus, the 352-residue chain is Photosystem II protein D1 (352 aa).

Thr2 carries the N-acetylthreonine modification. Phosphothreonine is present on Thr2. Helical transmembrane passes span 29–46 (YIGWFGVLMIPTLLTATS), 118–133 (HFFLGICCYMGREWEL), and 142–156 (WIAVAYSAPVAAATA). A chlorophyll a-binding site is contributed by His118. Tyr126 lines the pheophytin a pocket. Positions 170 and 189 each coordinate [CaMn4O5] cluster. Residues 197 to 218 (FHMLGVAGVFGGSLFSAMHGSL) form a helical membrane-spanning segment. His198 contributes to the chlorophyll a binding site. A quinone contacts are provided by residues His215 and 264–265 (SF). His215 serves as a coordination point for Fe cation. Fe cation is bound at residue His272. A helical membrane pass occupies residues 274–288 (FLAAWPVVGIWFTAL). [CaMn4O5] cluster contacts are provided by His332, Glu333, Asp342, and Ala344. A propeptide spanning residues 345-352 (SVEAPSIA) is cleaved from the precursor.

The protein belongs to the reaction center PufL/M/PsbA/D family. PSII is composed of 1 copy each of membrane proteins PsbA, PsbB, PsbC, PsbD, PsbE, PsbF, PsbH, PsbI, PsbJ, PsbK, PsbL, PsbM, PsbT, PsbX, PsbY, PsbZ, Psb30/Ycf12, at least 3 peripheral proteins of the oxygen-evolving complex and a large number of cofactors. It forms dimeric complexes. The cofactor is The D1/D2 heterodimer binds P680, chlorophylls that are the primary electron donor of PSII, and subsequent electron acceptors. It shares a non-heme iron and each subunit binds pheophytin, quinone, additional chlorophylls, carotenoids and lipids. D1 provides most of the ligands for the Mn4-Ca-O5 cluster of the oxygen-evolving complex (OEC). There is also a Cl(-1) ion associated with D1 and D2, which is required for oxygen evolution. The PSII complex binds additional chlorophylls, carotenoids and specific lipids.. In terms of processing, tyr-161 forms a radical intermediate that is referred to as redox-active TyrZ, YZ or Y-Z. Post-translationally, C-terminally processed by CTPA; processing is essential to allow assembly of the oxygen-evolving complex and thus photosynthetic growth.

The protein resides in the plastid. It is found in the chloroplast thylakoid membrane. It carries out the reaction 2 a plastoquinone + 4 hnu + 2 H2O = 2 a plastoquinol + O2. Functionally, photosystem II (PSII) is a light-driven water:plastoquinone oxidoreductase that uses light energy to abstract electrons from H(2)O, generating O(2) and a proton gradient subsequently used for ATP formation. It consists of a core antenna complex that captures photons, and an electron transfer chain that converts photonic excitation into a charge separation. The D1/D2 (PsbA/PsbD) reaction center heterodimer binds P680, the primary electron donor of PSII as well as several subsequent electron acceptors. In Chlorella ellipsoidea, this protein is Photosystem II protein D1.